The chain runs to 484 residues: 1,4-beta-D-glucan cellobiohydrolase CEL6A (484 aa).

The N-terminal stretch at 1-17 is a signal peptide; that stretch reads MAKRLLLTAALAATTLA. One can recognise a CBM1 domain in the interval 26–62; that stretch reads NCGSVWSQCGGQGWTGATCCASGSTCVAQNQWYSQCL. 2 cysteine pairs are disulfide-bonded: Cys34-Cys51 and Cys45-Cys61. The disordered stretch occupies residues 68–98; sequence TTTAQAPSSTRTTTSSSSRPTSSSISTSAVN. The substrate site is built by Trp171 and Asp173. Asn175 carries an N-linked (GlcNAc...) asparagine glycan. The segment at 208-230 is substrate binding loop 1; it reads YDLPDRDCAAAASNGEWAIADGG. The active-site Proton donor is Asp260. Residues His305, Trp308, Asn344, Trp405, Lys433, and Glu437 each contribute to the substrate site. Positions 431–469 are substrate binding loop 2; it reads WIKPGGECDGTSDTTAARYDHHCGFADALKPAPEAGQWF. The active-site Proton acceptor is Asp439.

This sequence belongs to the glycosyl hydrolase 6 (cellulase B) family. In terms of assembly, monomer. In terms of processing, both N- and O-glycosylated.

It is found in the secreted. It catalyses the reaction Hydrolysis of (1-&gt;4)-beta-D-glucosidic linkages in cellulose and cellotetraose, releasing cellobiose from the non-reducing ends of the chains.. Exoglucanase that plays an important function in biomass degradation by catalyzing the hydrolysis of the non-reducing end beta-1,4-glucosidic linkages in cellulose and cellotetraose to release cellobiose. Hydrolyzes crystalline and amorphous cellulose but is inactive on hydroxyethyl cellulose, mannan, galactomannan, xyloglucan, arabinoxylan, arabinan, xylan, and pectin. This Podospora anserina (strain S / ATCC MYA-4624 / DSM 980 / FGSC 10383) (Pleurage anserina) protein is 1,4-beta-D-glucan cellobiohydrolase CEL6A.